A 240-amino-acid polypeptide reads, in one-letter code: Ribonuclease PH (240 aa).

Phosphate contacts are provided by residues arginine 87 and glycine 125 to arginine 127.

It belongs to the RNase PH family. Homohexameric ring arranged as a trimer of dimers.

The catalysed reaction is tRNA(n+1) + phosphate = tRNA(n) + a ribonucleoside 5'-diphosphate. Functionally, phosphorolytic 3'-5' exoribonuclease that plays an important role in tRNA 3'-end maturation. Removes nucleotide residues following the 3'-CCA terminus of tRNAs; can also add nucleotides to the ends of RNA molecules by using nucleoside diphosphates as substrates, but this may not be physiologically important. Probably plays a role in initiation of 16S rRNA degradation (leading to ribosome degradation) during starvation. The chain is Ribonuclease PH from Dictyoglomus turgidum (strain DSM 6724 / Z-1310).